A 209-amino-acid chain; its full sequence is Uracil phosphoribosyltransferase (209 aa).

5-phospho-alpha-D-ribose 1-diphosphate-binding positions include Arg79, Arg104, and 131-139 (DPMLATGNS). Uracil is bound by residues Ile194 and 199–201 (GDA). Residue Asp200 participates in 5-phospho-alpha-D-ribose 1-diphosphate binding.

Belongs to the UPRTase family. Mg(2+) is required as a cofactor.

The catalysed reaction is UMP + diphosphate = 5-phospho-alpha-D-ribose 1-diphosphate + uracil. Its pathway is pyrimidine metabolism; UMP biosynthesis via salvage pathway; UMP from uracil: step 1/1. Its activity is regulated as follows. Allosterically activated by GTP. In terms of biological role, catalyzes the conversion of uracil and 5-phospho-alpha-D-ribose 1-diphosphate (PRPP) to UMP and diphosphate. This Rhizobium meliloti (strain 1021) (Ensifer meliloti) protein is Uracil phosphoribosyltransferase.